We begin with the raw amino-acid sequence, 136 residues long: Phospholipase A2 (136 aa).

Tryptophan 8, glycine 10, and glycine 12 together coordinate Ca(2+). 5 cysteine pairs are disulfide-bonded: cysteine 9–cysteine 31, cysteine 30–cysteine 70, cysteine 37–cysteine 63, cysteine 61–cysteine 95, and cysteine 105–cysteine 115. Asparagine 16 carries N-linked (GlcNAc...) asparagine glycosylation. Histidine 34 is a catalytic residue. Aspartate 35 is a binding site for Ca(2+). Residue aspartate 64 is part of the active site.

This sequence belongs to the phospholipase A2 family. It depends on Ca(2+) as a cofactor. In terms of tissue distribution, expressed by the venom gland.

Its subcellular location is the secreted. The catalysed reaction is a 1,2-diacyl-sn-glycero-3-phosphocholine + H2O = a 1-acyl-sn-glycero-3-phosphocholine + a fatty acid + H(+). In terms of biological role, PLA2 catalyzes the calcium-dependent hydrolysis of the 2-acyl groups in 3-sn-phosphoglycerides. The chain is Phospholipase A2 from Bombus pensylvanicus (American bumblebee).